The primary structure comprises 83 residues: Kunitz-type serine protease inhibitor textilinin-4 (83 aa).

The signal sequence occupies residues 1–24; it reads MSSGGLLLLLGLLTLWEVLTPVSS. The region spanning 31 to 81 is the BPTI/Kunitz inhibitor domain; the sequence is CELPADTGSCKGNVPRFYYNADHHQCLKFIYGGCGGNANNFKTIEECKSTC. Cystine bridges form between Cys31-Cys81, Cys40-Cys64, and Cys56-Cys77.

The protein belongs to the venom Kunitz-type family. Expressed by the venom gland.

It localises to the secreted. Functionally, serine protease inhibitor. Does not inhibit plasmin, and does not reduce blood loss in the mouse tail vein blood loss model. The sequence is that of Kunitz-type serine protease inhibitor textilinin-4 from Pseudonaja textilis textilis (Eastern brown snake).